The chain runs to 238 residues: Ribosomal RNA small subunit methyltransferase G (238 aa).

S-adenosyl-L-methionine contacts are provided by residues glycine 106, leucine 111, 157-158 (IE), and arginine 170.

It belongs to the methyltransferase superfamily. RNA methyltransferase RsmG family.

Its subcellular location is the cytoplasm. The catalysed reaction is guanosine(527) in 16S rRNA + S-adenosyl-L-methionine = N(7)-methylguanosine(527) in 16S rRNA + S-adenosyl-L-homocysteine. Specifically methylates the N7 position of guanine in position 527 of 16S rRNA. The chain is Ribosomal RNA small subunit methyltransferase G from Psychrobacter cryohalolentis (strain ATCC BAA-1226 / DSM 17306 / VKM B-2378 / K5).